The chain runs to 269 residues: Cyclic AMP-dependent transcription factor ATF-1 (269 aa).

Positions 1 to 90 (MEDSHKSNTT…GEGENPSISA (90 aa)) are disordered. Residues 9-18 (TTETASQPGS) show a composition bias toward polar residues. Residues 31–90 (QVSSLSESEESQDSSDSIGSSQKAHGILARRPSYRKILKDLSSEDTRGRKGEGENPSISA) form the KID domain. Serine 63 is modified (phosphoserine; by CaMK1, CDK3, RPS6KA4 and RPS6KA5). Over residues 67–83 (ILKDLSSEDTRGRKGEG) the composition is skewed to basic and acidic residues. Serine 196 is subject to Phosphoserine; by HIPK2. Lysine 206 participates in a covalent cross-link: Glycyl lysine isopeptide (Lys-Gly) (interchain with G-Cter in SUMO2). Residues 211-269 (QLRREIRLMKNREAARECRRKKKEYVKCLENRVAVLENQNKTLIEELKTLKDLYSHKSV) form the bZIP domain. Residues 213–237 (RREIRLMKNREAARECRRKKKEYVK) form a basic motif region. The tract at residues 239-260 (LENRVAVLENQNKTLIEELKTL) is leucine-zipper.

Belongs to the bZIP family. ATF subfamily. Binds DNA as a dimer. Interacts with HIPK2 and CDK3. Interacts with MOTS-c, a peptide produced by the mitochondrially encoded 12S rRNA MT-RNR1; the interaction occurs in the nucleus following metabolic stress. Post-translationally, phosphorylated at Ser-196 by HIPK2 in response to genotoxic stress. This phosphorylation promotes transcription repression of FTH1 and other antioxidant detoxification genes. The CDK3-mediated phosphorylation at Ser-63 promotes its transactivation and transcriptional activities. Phosphorylated at Ser-63 by RPS6KA4 and RPS6KA5 in response to mitogenic or stress stimuli.

It is found in the nucleus. Its function is as follows. Binds the cAMP response element (CRE) (consensus: 5'-GTGACGT[AC][AG]-3'), a sequence present in many viral and cellular promoters. Binds to the Tax-responsive element (TRE) of HTLV-I. Mediates PKA-induced stimulation of CRE-reporter genes. Represses the expression of FTH1 and other antioxidant detoxification genes. Triggers cell proliferation and transformation. The polypeptide is Cyclic AMP-dependent transcription factor ATF-1 (Atf1) (Mus musculus (Mouse)).